A 409-amino-acid chain; its full sequence is Putative lipoate-protein ligase A (409 aa).

In terms of domain architecture, BPL/LPL catalytic spans 146–330; it reads GPDNCRLLFY…RFQKTFKVDG (185 aa). Residues R188, 193–196, and K249 each bind ATP; that span reads GTVL. K249 lines the (R)-lipoate pocket.

The protein belongs to the LplA family. Monomer.

It carries out the reaction L-lysyl-[lipoyl-carrier protein] + (R)-lipoate + ATP = N(6)-[(R)-lipoyl]-L-lysyl-[lipoyl-carrier protein] + AMP + diphosphate + H(+). Its pathway is protein modification; protein lipoylation via exogenous pathway; protein N(6)-(lipoyl)lysine from lipoate: step 1/2. The protein operates within protein modification; protein lipoylation via exogenous pathway; protein N(6)-(lipoyl)lysine from lipoate: step 2/2. In terms of biological role, catalyzes both the ATP-dependent activation of exogenously supplied lipoate to lipoyl-AMP and the transfer of the activated lipoyl onto the lipoyl domains of lipoate-dependent enzymes. The protein is Putative lipoate-protein ligase A (AIM22) of Saccharomyces cerevisiae (strain ATCC 204508 / S288c) (Baker's yeast).